The following is a 65-amino-acid chain: Hainantoxin-X.3 (65 aa).

Residues Met-1–Ala-20 form the signal peptide. Positions Glu-21–Arg-37 are excised as a propeptide. 3 disulfides stabilise this stretch: Cys-39–Cys-56, Cys-46–Cys-59, and Cys-55–Cys-64.

This sequence belongs to the neurotoxin 36 family. 02 subfamily. In terms of tissue distribution, expressed by the venom gland.

Its subcellular location is the secreted. In terms of biological role, reversibly blocks N-type calcium channels (Cav2.2/CACNA1B) in rat dorsal root ganglion cells. Elicits no toxic symptoms in either vertebrates or invertebrates during a period of 48 hours post-injection, when it was assayed in vivo by direct injection into mice and cockroaches. This is Hainantoxin-X.3 from Cyriopagopus hainanus (Chinese bird spider).